A 454-amino-acid chain; its full sequence is UPF0210 protein BL1209 (454 aa).

It belongs to the UPF0210 family. In terms of assembly, homodimer.

The sequence is that of UPF0210 protein BL1209 from Bifidobacterium longum (strain NCC 2705).